Here is a 78-residue protein sequence, read N- to C-terminus: Large ribosomal subunit protein bL28 (78 aa).

The tract at residues 1-25 is disordered; it reads MSRVCQVTGKRPTVGNNRSHARNAT.

Belongs to the bacterial ribosomal protein bL28 family.

This Alteromonas mediterranea (strain DSM 17117 / CIP 110805 / LMG 28347 / Deep ecotype) protein is Large ribosomal subunit protein bL28.